Here is a 428-residue protein sequence, read N- to C-terminus: Enolase (428 aa).

Residue Gln-163 participates in (2R)-2-phosphoglycerate binding. The Proton donor role is filled by Glu-205. Mg(2+)-binding residues include Asp-242, Glu-286, and Asp-313. Positions 338, 367, 368, and 389 each coordinate (2R)-2-phosphoglycerate. Lys-338 functions as the Proton acceptor in the catalytic mechanism.

The protein belongs to the enolase family. The cofactor is Mg(2+).

The protein resides in the cytoplasm. Its subcellular location is the secreted. It localises to the cell surface. It catalyses the reaction (2R)-2-phosphoglycerate = phosphoenolpyruvate + H2O. Its pathway is carbohydrate degradation; glycolysis; pyruvate from D-glyceraldehyde 3-phosphate: step 4/5. Functionally, catalyzes the reversible conversion of 2-phosphoglycerate (2-PG) into phosphoenolpyruvate (PEP). It is essential for the degradation of carbohydrates via glycolysis. In Verminephrobacter eiseniae (strain EF01-2), this protein is Enolase.